Reading from the N-terminus, the 109-residue chain is Small ribosomal subunit protein bS6 (109 aa).

This sequence belongs to the bacterial ribosomal protein bS6 family.

Binds together with bS18 to 16S ribosomal RNA. This Ehrlichia ruminantium (strain Gardel) protein is Small ribosomal subunit protein bS6.